Consider the following 230-residue polypeptide: Protein LURP-one-related 11 (230 aa).

It belongs to the LOR family.

In terms of biological role, might be related to the phospholipid scramblase and tubby-like superfamily of membrane tethered transcription factors. The sequence is that of Protein LURP-one-related 11 from Arabidopsis thaliana (Mouse-ear cress).